The following is a 414-amino-acid chain: D-mannose isomerase (414 aa).

Residues H255 and H390 each act as proton donor/acceptor in the active site.

This sequence belongs to the N-acylglucosamine 2-epimerase family. Monomer.

The catalysed reaction is D-mannose = D-fructose. With respect to regulation, strongly inhibited by Ag(2+), Cu(2+) and cetyltrimethyl ammonium bromide (CTAB). Catalyzes the reversible isomerization of D-mannose to D-fructose. Shows high specific activity towards mannose and fructose, and has no detectable activity towards other monosaccharides and disaccharides. This chain is D-mannose isomerase, found in Pseudomonas cannabina pv. alisalensis.